Reading from the N-terminus, the 239-residue chain is Ribosomal RNA small subunit methyltransferase G (239 aa).

S-adenosyl-L-methionine is bound by residues Gly-77, Phe-82, 128 to 129 (AE), and Arg-147. The interval 216-239 (EKKKQTPKKYPRKPGTPNKSPIEG) is disordered.

Belongs to the methyltransferase superfamily. RNA methyltransferase RsmG family.

The protein localises to the cytoplasm. Its function is as follows. Specifically methylates the N7 position of guanine in position 535 of 16S rRNA. The protein is Ribosomal RNA small subunit methyltransferase G of Bacillus pumilus (strain SAFR-032).